The sequence spans 422 residues: MKDLKVAVVGLGYVGLPLAVEFGKKRTVVGFDINQGRIAELRQGIDSTLEVDAAELKEASELSFTFNLQDLQKCNVFIVTVPTPIDEHKQPDLTPLVKASESIGKVLKKGDIVIYESTVYPGATEEDCVPVLEKFSGLRFNEDFFAGYSPERINPGDKEHRVSSIKKVTSGSTPEIAELVDSLYREIITAGTHKASSIKVAEAAKVIENTQRDLNIALINELAIIFNRMGIDTEAVLKAAGTKWNFMPFRPGLVGGHCIGVDPYYLTHKAQSIGYHPEIILAGRRLNDGMGAYVVSQLVKAMLKRRIHVDGARVLLMGLTFKENCPDLRNTKVVDIVRELAEYNIQVDVFDPWVSAEDAMHEYGITPVGTPSHGAYDGIILAVAHSEFKNMGAENIRKLGKAEHVLYDLKYLLDEDKSDLRL.

The NAD(+) site is built by V14, D32, R37, T83, and T118. C258 (nucleophile) is an active-site residue. Residue R329 coordinates NAD(+).

It belongs to the UDP-glucose/GDP-mannose dehydrogenase family.

The catalysed reaction is UDP-N-acetyl-alpha-D-glucosamine + 2 NAD(+) + H2O = UDP-2-acetamido-2-deoxy-alpha-D-glucuronate + 2 NADH + 3 H(+). It participates in bacterial outer membrane biogenesis; LPS O-antigen biosynthesis. Requires either potassium or ammonium-containing salts for activity. In terms of biological role, dehydrogenase required for the biosynthesis of the B-band O antigen of serotype O6 lipopolysaccharide. Is also required for flagellin glycosylation. Catalyzes the conversion of UDP-N-acetylglucosamine (UDP-GlcNAc) to UDP-N-acetylglucosaminuronic acid (UDP-GlcNAcA). Can also catalyze the conversion of UDP-N-acetyl-galactosamine (UDP-GalNAc) to UDP-N-acetylgalactosaminuronic acid (UDP-GalNAcA), with low efficiency. Can use NAD(+) or NADP(+), with a preference for NAD(+). This is UDP-N-acetyl-D-glucosamine 6-dehydrogenase from Pseudomonas aeruginosa.